The following is a 156-amino-acid chain: Small ribosomal subunit protein uS7 (156 aa).

The protein belongs to the universal ribosomal protein uS7 family. As to quaternary structure, part of the 30S ribosomal subunit. Contacts proteins S9 and S11.

Its function is as follows. One of the primary rRNA binding proteins, it binds directly to 16S rRNA where it nucleates assembly of the head domain of the 30S subunit. Is located at the subunit interface close to the decoding center, probably blocks exit of the E-site tRNA. The polypeptide is Small ribosomal subunit protein uS7 (Paracoccus denitrificans (strain Pd 1222)).